The chain runs to 401 residues: Short chain dehydrogenase/reductase dpchH (401 aa).

Residue asparagine 16 is glycosylated (N-linked (GlcNAc...) asparagine). Residues 51 to 71 traverse the membrane as a helical segment; the sequence is VRAVDVLFGTFLYVPLGILFL. NAD(+)-binding positions include 72-80, 99-100, and 118-120; these read KKSLSGFGD, TG, and AKV. Asparagine 242 carries N-linked (GlcNAc...) asparagine glycosylation. Tyrosine 275 (proton acceptor) is an active-site residue. Residues 275–279 and 308–310 contribute to the NAD(+) site; these read YGTSK and GTI. Asparagine 386 carries N-linked (GlcNAc...) asparagine glycosylation.

The protein resides in the membrane. The protein operates within secondary metabolite biosynthesis; terpenoid biosynthesis. Functionally, short chain dehydrogenase/reductase; part of the gene cluster that mediates the biosynthesis of the diterpenoid pyrones higginsianins A and B. The first step of the pathway is the synthesis of the alpha-pyrone moiety by the polyketide synthase dpchA via condensation of one acetyl-CoA starter unit with 3 malonyl-CoA units and 2 methylations. The alpha-pyrone is then combined with geranylgeranyl pyrophosphate (GGPP) formed by the GGPP synthase dpchD through the action of the prenyltransferase dpchC to yield a linear alpha-pyrone diterpenoid. Subsequent steps in the diterpenoid pyrone biosynthetic pathway involve the decalin core formation, which is initiated by the epoxidation of the C10-C11 olefin by the FAD-dependent oxidoreductase dpchE, and is followed by a cyclization cascade catalyzed by the terpene cyclase dpchB. The short chain dehydrogenase/reductase dpchG then oxidizes the 8S hydroxy group to a ketone and the short chain dehydrogenase/reductase dpchH reduces the ketone to the 8R hydroxy group to yield higginsianin B. Finally, the FAD-dependent oxidoreductase dpchF converts higginsianin B into higginsianin A. This chain is Short chain dehydrogenase/reductase dpchH, found in Colletotrichum higginsianum (strain IMI 349063) (Crucifer anthracnose fungus).